A 158-amino-acid polypeptide reads, in one-letter code: Transcriptional repressor NrdR (158 aa).

Positions 1–22 are disordered; sequence MRCPFCGSDDTQVKDSRPAEDN. A zinc finger spans residues 3-34; it reads CPFCGSDDTQVKDSRPAEDNSAIRRRRICPDC. Residues 11–22 are compositionally biased toward basic and acidic residues; sequence TQVKDSRPAEDN. Positions 49–139 constitute an ATP-cone domain; it reads LTVLKKTGRK…VYRDFSHAED (91 aa).

Belongs to the NrdR family. Requires Zn(2+) as cofactor.

Negatively regulates transcription of bacterial ribonucleotide reductase nrd genes and operons by binding to NrdR-boxes. The polypeptide is Transcriptional repressor NrdR (Allorhizobium ampelinum (strain ATCC BAA-846 / DSM 112012 / S4) (Agrobacterium vitis (strain S4))).